A 251-amino-acid chain; its full sequence is MAPKNSSWNPFDDEKEAAKSFSLNPFDDDDDDKEVEKRFTSSLKPSGGKENQTVQELESYAVYNSEETTKTVQGCLKVAEEIRCDASKTLVMLNEQGDQITRTHQKTVDLDHHLSRGEKILGRLGGVFSRTWKPKKSRSITGPVITKGDSPKRKVIDLKTREKLGLNPSLKPKSKTLPEAVDAYQKTQIAKQDEALTDLSALLGELKNMAVDMGTAIERQTNELDHLQDNADELNYRVKQSNQRARYLLRK.

The segment at 1-52 is disordered; that stretch reads MAPKNSSWNPFDDEKEAAKSFSLNPFDDDDDDKEVEKRFTSSLKPSGGKENQ. A compositionally biased stretch (polar residues) spans 40 to 52; it reads TSSLKPSGGKENQ. The t-SNARE coiled-coil homology domain maps to 186–248; it reads KTQIAKQDEA…KQSNQRARYL (63 aa).

Belongs to the SNAP-25 family.

Its subcellular location is the membrane. The protein localises to the cytoplasm. Functionally, SNAREs, soluble N-ethylmaleimide-sensitive factor-attachment protein receptors, are essential proteins for fusion of cellular membranes. SNAREs localized on opposing membranes assemble to form a trans-SNARE complex, an extended, parallel four alpha-helical bundle that drives membrane fusion. The sequence is that of SNAP25 homologous protein SNAP29 (SNAP29) from Arabidopsis thaliana (Mouse-ear cress).